The sequence spans 424 residues: Probable threonylcarbamoyladenosine tRNA methylthiotransferase (424 aa).

The 112-residue stretch at I4 to N115 folds into the MTTase N-terminal domain. Positions 13, 48, 79, 150, 154, and 157 each coordinate [4Fe-4S] cluster. The 230-residue stretch at R136–E365 folds into the Radical SAM core domain. The TRAM domain maps to R368 to D424.

This sequence belongs to the methylthiotransferase family. CDKAL1 subfamily. It depends on [4Fe-4S] cluster as a cofactor.

The enzyme catalyses N(6)-L-threonylcarbamoyladenosine(37) in tRNA + (sulfur carrier)-SH + AH2 + 2 S-adenosyl-L-methionine = 2-methylsulfanyl-N(6)-L-threonylcarbamoyladenosine(37) in tRNA + (sulfur carrier)-H + 5'-deoxyadenosine + L-methionine + A + S-adenosyl-L-homocysteine + 2 H(+). Its function is as follows. Catalyzes the methylthiolation of N6-threonylcarbamoyladenosine (t(6)A), leading to the formation of 2-methylthio-N6-threonylcarbamoyladenosine (ms(2)t(6)A) at position 37 in tRNAs that read codons beginning with adenine. In Methanothermobacter thermautotrophicus (strain ATCC 29096 / DSM 1053 / JCM 10044 / NBRC 100330 / Delta H) (Methanobacterium thermoautotrophicum), this protein is Probable threonylcarbamoyladenosine tRNA methylthiotransferase.